Reading from the N-terminus, the 317-residue chain is Melanocyte-stimulating hormone receptor (317 aa).

Topologically, residues 1–37 (MPLQGPQRRLLGSLNSTLPATPYLGLTTNQTEPPCLE) are extracellular. N-linked (GlcNAc...) asparagine glycosylation is present at Asn29. A helical transmembrane segment spans residues 38-63 (VSIPDGLFLSLGLVSLVENVLVVTAI). Residues 64-72 (AKNRNLHSP) lie on the Cytoplasmic side of the membrane. The chain crosses the membrane as a helical span at residues 73-93 (MYYFICCLAVSDLLVSMSNVL). Residues 94–118 (EMAILLLLEAGVLATQASVLQQLDN) are Extracellular-facing. The helical transmembrane segment at 119–140 (IIDVLICGSMVSSLCFLGSIAV) threads the bilayer. The Cytoplasmic segment spans residues 141-163 (DRYISIFYALRYHSIMMLPRVWR). A helical membrane pass occupies residues 164-183 (AIVAIWVVSVLSSTLFIAYY). Residues 184–191 (NHTAVLLC) are Extracellular-facing. The helical transmembrane segment at 192–211 (LVTFFVAMLVLMAVLYVHML) threads the bilayer. The Cytoplasmic portion of the chain corresponds to 212-240 (ARACQHARGIARLHKRQHPIHQGFGLKGA). A helical transmembrane segment spans residues 241–266 (ATLTILLGVFFLCWGPFFLHLSLLIL). Topologically, residues 267-279 (CPQHPTCGCVFKN) are extracellular. A helical membrane pass occupies residues 280–300 (FKLFLTLILCSAIVDPLIYAF). Over 301–317 (RSQELRKTLQEVLLCSW) the chain is Cytoplasmic. A lipid anchor (S-palmitoyl cysteine) is attached at Cys315.

This sequence belongs to the G-protein coupled receptor 1 family. As to quaternary structure, interacts with MGRN1, but does not undergo MGRN1-mediated ubiquitination; this interaction competes with GNAS-binding and thus inhibits agonist-induced cAMP production. Interacts with OPN3; the interaction results in a decrease in MC1R-mediated cAMP signaling and ultimately a decrease in melanin production in melanocytes.

It is found in the cell membrane. Its function is as follows. Receptor for MSH (alpha, beta and gamma) and ACTH. The activity of this receptor is mediated by G proteins which activate adenylate cyclase. Mediates melanogenesis, the production of eumelanin (black/brown) and phaeomelanin (red/yellow), via regulation of cAMP signaling in melanocytes. This is Melanocyte-stimulating hormone receptor (MC1R) from Equus caballus (Horse).